The sequence spans 469 residues: MASSAAAIVSGSPFRSSPLIHNHHASRYAPGSISVVSLPRQVSRRGLSVKSGLIEPDGGKLMNLVVEESRRRVMKHEAETVPARIKLNRVDLEWVHVLSEGWASPLKGFMRQSEFLQTLHFNSFRLEDGSVVNMSVPIVLAIDDDQKFRIGDSNQVTLVDSVGNPIAILNDIEIYKHPKEERIARTWGTTARGLPYAEEAITKAGNWLIGGDLQVLEPIKYNDGLDRFRLSPSQLREEFIRRGADAVFAFQLRNPVHNGHALLMTDTRRRLLEMGYKNPVLLLNPLGGFTKADDVPLSWRMRQHEKVLEDGVLDPETTVVSIFPSPMLYAGPTEVQWHAKARINAGANFYIVGRDPAGMGHPTEKRDLYDADHGKKVLSMAPGLERLNILPFKVAAYDKTQGKMAFFDPSRSQDFLFISGTKMRGLAKKKENPPDGFMCPSGWKVLVDYYDSLSAETGNGRVSEAVASA.

A chloroplast-targeting transit peptide spans 1 to 51 (MASSAAAIVSGSPFRSSPLIHNHHASRYAPGSISVVSLPRQVSRRGLSVKS).

Belongs to the sulfate adenylyltransferase family. Homotetramer. As to expression, expressed in roots and leaves.

It localises to the plastid. Its subcellular location is the chloroplast stroma. It catalyses the reaction sulfate + ATP + H(+) = adenosine 5'-phosphosulfate + diphosphate. Its pathway is sulfur metabolism; hydrogen sulfide biosynthesis; sulfite from sulfate: step 1/3. In terms of biological role, sulfate adenylyltransferase. Catalyzes the first step of the sulfate assimilation pathway. This is ATP sulfurylase 4, chloroplastic (APS4) from Arabidopsis thaliana (Mouse-ear cress).